The primary structure comprises 917 residues: Probable dipeptidyl-aminopeptidase B (917 aa).

The interval 1–75 is disordered; it reads MTVGRRLNDE…KYRDDVEEDW (75 aa). The Cytoplasmic segment spans residues 1-93; it reads MTVGRRLNDE…NAKPSQRRTQ (93 aa). Positions 27–39 are enriched in low complexity; it reads DSSSTASVSLTLV. The span at 40 to 49 shows a compositional bias: polar residues; sequence DGTNHTTAKP. The span at 57–69 shows a compositional bias: basic and acidic residues; that stretch reads VSRDRYADEKYRD. A helical; Signal-anchor for type II membrane protein transmembrane segment spans residues 94–114; it reads IVFWLLVALCVGGWAVAFLFF. The Vacuolar segment spans residues 115-917; that stretch reads VTSPGNTIST…KRVIRRLLHR (803 aa). The segment covering 124–133 has biased composition (polar residues); sequence TTPDTGSGSP. Residues 124–150 are disordered; sequence TTPDTGSGSPDSDVIKPGSPPAGKKIP. N206, N302, and N354 each carry an N-linked (GlcNAc...) asparagine glycan. S759 functions as the Charge relay system in the catalytic mechanism. An N-linked (GlcNAc...) asparagine glycan is attached at N818. Active-site charge relay system residues include D836 and H869.

This sequence belongs to the peptidase S9B family.

The protein resides in the vacuole membrane. The enzyme catalyses Release of an N-terminal dipeptide, Xaa-Yaa-|-Zaa-, from a polypeptide, preferentially when Yaa is Pro, provided Zaa is neither Pro nor hydroxyproline.. In terms of biological role, type IV dipeptidyl-peptidase which removes N-terminal dipeptides sequentially from polypeptides having unsubstituted N-termini provided that the penultimate residue is proline. In Arthroderma gypseum (strain ATCC MYA-4604 / CBS 118893) (Microsporum gypseum), this protein is Probable dipeptidyl-aminopeptidase B (DAPB).